Here is a 1585-residue protein sequence, read N- to C-terminus: Maestro heat-like repeat-containing protein family member 2B (1585 aa).

15 HEAT repeats span residues 28–65 (VNKE…DMRD), 228–263 (GYAL…AAVL), 272–309 (LRRS…LAHS), 310–346 (NPGE…ADEP), 405–445 (TLNR…LVIG), 531–569 (IGLL…STVL), 572–611 (TMLL…NSTE), 662–699 (ENHL…LTKT), 777–819 (SYKE…LKPQ), 964–1001 (HLEV…KFIP), 1021–1059 (PTCT…HMPV), 1112–1151 (ASSG…VISM), 1157–1195 (GLYP…QGEQ), 1258–1295 (GVIL…EPIL), and 1363–1402 (CESL…EQDD).

Found in a complex at least composed of MROH2B, PRKACA isoform 2 and TCP11. Interacts with PRKACA. Interacts with TCP11. Post-translationally, constitutively phosphorylated on serine and threonine residues in acrosomal region of the sperm head, midpiece and flagellar regions of noncapacitated spermatozoa. Phosphorylation on tyrosine residues increases upon sperm capacitation within the acrosomal and tail regions in a protein kinase A (PKA)-dependent signaling pathway.

It localises to the cytoplasm. The protein localises to the cytoplasmic vesicle. It is found in the secretory vesicle. Its subcellular location is the acrosome. The protein resides in the cell projection. It localises to the cilium. The protein localises to the flagellum. In terms of biological role, may play a role in the process of sperm capacitation. In Homo sapiens (Human), this protein is Maestro heat-like repeat-containing protein family member 2B.